A 180-amino-acid chain; its full sequence is Crossover junction endodeoxyribonuclease RuvC (180 aa).

Catalysis depends on residues D7, E66, and D138. Mg(2+)-binding residues include D7, E66, and D138.

Belongs to the RuvC family. In terms of assembly, homodimer which binds Holliday junction (HJ) DNA. The HJ becomes 2-fold symmetrical on binding to RuvC with unstacked arms; it has a different conformation from HJ DNA in complex with RuvA. In the full resolvosome a probable DNA-RuvA(4)-RuvB(12)-RuvC(2) complex forms which resolves the HJ. Mg(2+) is required as a cofactor.

It is found in the cytoplasm. The catalysed reaction is Endonucleolytic cleavage at a junction such as a reciprocal single-stranded crossover between two homologous DNA duplexes (Holliday junction).. The RuvA-RuvB-RuvC complex processes Holliday junction (HJ) DNA during genetic recombination and DNA repair. Endonuclease that resolves HJ intermediates. Cleaves cruciform DNA by making single-stranded nicks across the HJ at symmetrical positions within the homologous arms, yielding a 5'-phosphate and a 3'-hydroxyl group; requires a central core of homology in the junction. The consensus cleavage sequence is 5'-(A/T)TT(C/G)-3'. Cleavage occurs on the 3'-side of the TT dinucleotide at the point of strand exchange. HJ branch migration catalyzed by RuvA-RuvB allows RuvC to scan DNA until it finds its consensus sequence, where it cleaves and resolves the cruciform DNA. The sequence is that of Crossover junction endodeoxyribonuclease RuvC from Burkholderia pseudomallei (strain 668).